Reading from the N-terminus, the 837-residue chain is Protein translocase subunit SecA (837 aa).

Residues Q85, 103-107 (GEGKT), and D493 each bind ATP. Zn(2+) contacts are provided by C821, C823, C832, and H833.

Belongs to the SecA family. Monomer and homodimer. Part of the essential Sec protein translocation apparatus which comprises SecA, SecYEG and auxiliary proteins SecDF. Other proteins may also be involved. Requires Zn(2+) as cofactor.

It localises to the cell membrane. The protein resides in the cytoplasm. The enzyme catalyses ATP + H2O + cellular proteinSide 1 = ADP + phosphate + cellular proteinSide 2.. In terms of biological role, part of the Sec protein translocase complex. Interacts with the SecYEG preprotein conducting channel. Has a central role in coupling the hydrolysis of ATP to the transfer of proteins into and across the cell membrane, serving as an ATP-driven molecular motor driving the stepwise translocation of polypeptide chains across the membrane. In Streptococcus pneumoniae serotype 2 (strain D39 / NCTC 7466), this protein is Protein translocase subunit SecA.